The sequence spans 171 residues: MAAMNSSVLTCSYAIAGSGSVELNQKVGLVNSSVGFGQKKQMIMPVIKAQRVVGDDVDGSNGRRSAMVFLAATLFSTAAVSASANAGVIDEYLERSKTNKELNDKKRLATSGANFARAFTVQFGSCKFPENFTGCQDLAKQKKVPFISEDIALECEGKDKYKCGSNVFWKW.

Residues Met1–Ala49 constitute a chloroplast transit peptide. The transit peptide at Gln50–Ala86 directs the protein to the thylakoid. N-acetylglycine; partial is present on Gly87.

The protein belongs to the psaN family. In terms of assembly, interacts with GRF5, GRF7, GRF9 and GRF10. The transit peptide is the site of PSAN that associates with 14-3-3.

Its subcellular location is the plastid. The protein localises to the chloroplast thylakoid membrane. Its function is as follows. May function in mediating the binding of the antenna complexes to the PSI reaction center and core antenna. Plays an important role in docking plastocyanin to the PSI complex. Does not bind pigments. This chain is Photosystem I reaction center subunit N, chloroplastic (PSAN), found in Arabidopsis thaliana (Mouse-ear cress).